Consider the following 834-residue polypeptide: Glycerol-3-phosphate acyltransferase (834 aa).

An HXXXXD motif motif is present at residues 309 to 314 (CHRSHI).

This sequence belongs to the GPAT/DAPAT family.

The protein resides in the cell inner membrane. It carries out the reaction sn-glycerol 3-phosphate + an acyl-CoA = a 1-acyl-sn-glycero-3-phosphate + CoA. It participates in phospholipid metabolism; CDP-diacylglycerol biosynthesis; CDP-diacylglycerol from sn-glycerol 3-phosphate: step 1/3. This is Glycerol-3-phosphate acyltransferase from Pseudomonas fluorescens (strain Pf0-1).